The following is a 233-amino-acid chain: Ribose-5-phosphate isomerase A (233 aa).

Residues 28–31 (SGST), 83–86 (DGAD), and 96–99 (KGGG) contribute to the substrate site. The active-site Proton acceptor is Glu-105. Position 123 (Lys-123) interacts with substrate.

This sequence belongs to the ribose 5-phosphate isomerase family. Homodimer.

It catalyses the reaction aldehydo-D-ribose 5-phosphate = D-ribulose 5-phosphate. It functions in the pathway carbohydrate degradation; pentose phosphate pathway; D-ribose 5-phosphate from D-ribulose 5-phosphate (non-oxidative stage): step 1/1. Functionally, catalyzes the reversible conversion of ribose-5-phosphate to ribulose 5-phosphate. This Bartonella bacilliformis (strain ATCC 35685 / KC583 / Herrer 020/F12,63) protein is Ribose-5-phosphate isomerase A.